Reading from the N-terminus, the 889-residue chain is A disintegrin and metalloproteinase with thrombospondin motifs 8 (889 aa).

A signal peptide spans Met-1–Gly-26. The propeptide occupies Ala-27–Arg-213. The disordered stretch occupies residues Gln-138–Arg-210. The segment covering Glu-173–Gln-183 has biased composition (basic and acidic residues). Acidic residues predominate over residues Glu-184–Gly-197. The Peptidase M12B domain occupies Arg-219–Pro-429. 11 disulfide bridges follow: Cys-294–Cys-347, Cys-323–Cys-329, Cys-341–Cys-424, Cys-379–Cys-408, Cys-452–Cys-477, Cys-463–Cys-486, Cys-472–Cys-507, Cys-501–Cys-512, Cys-538–Cys-575, Cys-542–Cys-580, and Cys-553–Cys-565. Asn-344 carries N-linked (GlcNAc...) asparagine glycosylation. His-363 lines the Zn(2+) pocket. The active site involves Glu-364. Positions 367 and 373 each coordinate Zn(2+). N-linked (GlcNAc...) asparagine glycans are attached at residues Asn-400, Asn-465, and Asn-490. Residues Gly-438–Ala-525 form the Disintegrin domain. A TSP type-1 1 domain is found at Asp-526–Pro-581. Asn-599 is a glycosylation site (N-linked (GlcNAc...) asparagine). The segment at Arg-690–Leu-831 is spacer. One can recognise a TSP type-1 2 domain in the interval His-833–Pro-888.

The cofactor is Zn(2+). In terms of processing, the precursor is cleaved by a furin endopeptidase. Glycosylated. Can be O-fucosylated by POFUT2 on a serine or a threonine residue found within the consensus sequence C1-X(2)-(S/T)-C2-G of the TSP type-1 repeat domains where C1 and C2 are the first and second cysteine residue of the repeat, respectively. Fucosylated repeats can then be further glycosylated by the addition of a beta-1,3-glucose residue by the glucosyltransferase, B3GALTL. Fucosylation mediates the efficient secretion of ADAMTS family members. Can also be C-glycosylated with one or two mannose molecules on tryptophan residues within the consensus sequence W-X-X-W of the TPRs, and N-glycosylated. These other glycosylations can also facilitate secretion. As to expression, highly expressed in adult and fetal lung, lower expression in brain, placenta, heart, stomach and fetal brain and kidney.

Its subcellular location is the secreted. It localises to the extracellular space. It is found in the extracellular matrix. Has anti-angiogenic properties. In Homo sapiens (Human), this protein is A disintegrin and metalloproteinase with thrombospondin motifs 8 (ADAMTS8).